Here is a 336-residue protein sequence, read N- to C-terminus: Ribosomal RNA small subunit methyltransferase C (336 aa).

It belongs to the methyltransferase superfamily. RsmC family. Monomer.

It is found in the cytoplasm. The enzyme catalyses guanosine(1207) in 16S rRNA + S-adenosyl-L-methionine = N(2)-methylguanosine(1207) in 16S rRNA + S-adenosyl-L-homocysteine + H(+). Functionally, specifically methylates the guanine in position 1207 of 16S rRNA in the 30S particle. The sequence is that of Ribosomal RNA small subunit methyltransferase C from Hamiltonella defensa subsp. Acyrthosiphon pisum (strain 5AT).